Consider the following 159-residue polypeptide: Stress-induced protein 1 (159 aa).

A sHSP domain is found at 33 to 141; that stretch reads NNFNNIVPQQ…TVRALPIHTS (109 aa).

The protein belongs to the small heat shock protein (HSP20) family.

In Caenorhabditis elegans, this protein is Stress-induced protein 1.